The chain runs to 331 residues: Cytosolic Fe-S cluster assembly factor NBP35 (331 aa).

Over residues 1–10 the composition is skewed to polar residues; that stretch reads MSPSQTQIEK. Residues 1 to 32 are disordered; the sequence is MSPSQTQIEKSQLAAPEPEHCPGPESELAGQG. The [4Fe-4S] cluster site is built by Cys21, Cys35, Cys38, and Cys44. 75–82 serves as a coordination point for ATP; it reads GKGGVGKS. 2 residues coordinate [4Fe-4S] cluster: Cys249 and Cys252.

The protein belongs to the Mrp/NBP35 ATP-binding proteins family. NUBP1/NBP35 subfamily. Heterotetramer of 2 NBP35 and 2 CFD1 chains. [4Fe-4S] cluster serves as cofactor.

The protein localises to the cytoplasm. Its subcellular location is the nucleus. Its function is as follows. Component of the cytosolic iron-sulfur (Fe/S) protein assembly (CIA) machinery. Required for maturation of extramitochondrial Fe-S proteins. The NBP35-CFD1 heterotetramer forms a Fe-S scaffold complex, mediating the de novo assembly of an Fe-S cluster and its transfer to target apoproteins. Required for biogenesis and export of both ribosomal subunits, which may reflect a role in assembly of the Fe/S clusters in RLI1, a protein which performs rRNA processing and ribosome export. The chain is Cytosolic Fe-S cluster assembly factor NBP35 from Candida albicans (strain SC5314 / ATCC MYA-2876) (Yeast).